The chain runs to 160 residues: Cyanate hydratase (160 aa).

Active-site residues include Arg100, Glu103, and Ser126.

Belongs to the cyanase family.

It catalyses the reaction cyanate + hydrogencarbonate + 3 H(+) = NH4(+) + 2 CO2. Its function is as follows. Catalyzes the reaction of cyanate with bicarbonate to produce ammonia and carbon dioxide. The polypeptide is Cyanate hydratase (Emericella nidulans (strain FGSC A4 / ATCC 38163 / CBS 112.46 / NRRL 194 / M139) (Aspergillus nidulans)).